Here is a 210-residue protein sequence, read N- to C-terminus: Fibroblast growth factor 8 (210 aa).

An N-terminal signal peptide occupies residues 1 to 27; that stretch reads MRLIPSRLSYLFLHLFAFCYYAQVTIQ.

This sequence belongs to the heparin-binding growth factors family. Monomer. Homodimer.

The protein localises to the secreted. Its function is as follows. Plays an important role in the regulation of embryonic development, cell proliferation, cell differentiation and cell migration. Required for Kupffer's vesicle ciliogenesis. This is Fibroblast growth factor 8 from Danio rerio (Zebrafish).